We begin with the raw amino-acid sequence, 297 residues long: Large ribosomal subunit protein uL18 (297 aa).

Belongs to the universal ribosomal protein uL18 family. In terms of assembly, component of the large ribosomal subunit (LSU).

The protein resides in the cytoplasm. Its subcellular location is the nucleus. In terms of biological role, component of the ribosome, a large ribonucleoprotein complex responsible for the synthesis of proteins in the cell. The small ribosomal subunit (SSU) binds messenger RNAs (mRNAs) and translates the encoded message by selecting cognate aminoacyl-transfer RNA (tRNA) molecules. The large subunit (LSU) contains the ribosomal catalytic site termed the peptidyl transferase center (PTC), which catalyzes the formation of peptide bonds, thereby polymerizing the amino acids delivered by tRNAs into a polypeptide chain. The nascent polypeptides leave the ribosome through a tunnel in the LSU and interact with protein factors that function in enzymatic processing, targeting, and the membrane insertion of nascent chains at the exit of the ribosomal tunnel. The protein is Large ribosomal subunit protein uL18 (RpL5) of Aedes aegypti (Yellowfever mosquito).